Consider the following 442-residue polypeptide: tRNA modification GTPase MnmE (442 aa).

(6S)-5-formyl-5,6,7,8-tetrahydrofolate is bound by residues Arg24, Glu82, and Lys122. One can recognise a TrmE-type G domain in the interval 219-366 (GFKVALVGEP…LRRALKREIE (148 aa)). Asn229 provides a ligand contact to K(+). GTP is bound by residues 229 to 234 (NAGKST), 248 to 254 (TDIAGTT), and 273 to 276 (DTAG). Ser233 contributes to the Mg(2+) binding site. Residues Thr248, Ile250, and Thr253 each contribute to the K(+) site. Thr254 is a Mg(2+) binding site. Lys442 is a binding site for (6S)-5-formyl-5,6,7,8-tetrahydrofolate.

It belongs to the TRAFAC class TrmE-Era-EngA-EngB-Septin-like GTPase superfamily. TrmE GTPase family. As to quaternary structure, homodimer. Heterotetramer of two MnmE and two MnmG subunits. It depends on K(+) as a cofactor.

Its subcellular location is the cytoplasm. Exhibits a very high intrinsic GTPase hydrolysis rate. Involved in the addition of a carboxymethylaminomethyl (cmnm) group at the wobble position (U34) of certain tRNAs, forming tRNA-cmnm(5)s(2)U34. The polypeptide is tRNA modification GTPase MnmE (Agrobacterium fabrum (strain C58 / ATCC 33970) (Agrobacterium tumefaciens (strain C58))).